The primary structure comprises 837 residues: Exonuclease 1 (837 aa).

The N-domain stretch occupies residues Met1–Asn99. Asp30, Asp78, Glu150, Asp152, Asp171, Asp173, and Asp225 together coordinate Mg(2+). The interaction with MSH3 stretch occupies residues Met129–Ala386. The segment at Arg138 to Ser229 is I-domain. Disordered regions lie at residues Thr345–Asn367 and Ile440–Met477. The interaction with MLH1 stretch occupies residues Pro387 to Arg488. Residues Thr449–Asp462 show a composition bias toward polar residues. The residue at position 480 (Lys480) is an N6-acetyllysine. Positions Asn555–Ser589 are disordered. Residues Gly556–Pro565 show a composition bias toward polar residues. Residues Ser589 and Ser601 each carry the phosphoserine modification. The tract at residues Pro591–His837 is interaction with MSH2. The interval Glu608–Ser740 is disordered. 3 stretches are compositionally biased toward polar residues: residues Arg611–Gln623, Ser665–Asp690, and Asn699–Gln713. Thr612 is subject to Phosphothreonine. Phosphoserine is present on residues Ser614 and Ser666. Phosphoserine is present on Ser737. An interaction with MLH1 region spans residues Leu778–His837.

This sequence belongs to the XPG/RAD2 endonuclease family. EXO1 subfamily. In terms of assembly, interacts with the MLH1-PMS2 heterodimer via MLH1. Interacts with MSH3. Interacts with the MSH2-MSH6 heterodimer via MSH2, and this interaction may increase the processivity of the 5'-&gt;3' exonuclease activity. Interacts with PCNA, and this interaction may both stimulate the cryptic 3'-&gt;5' exonuclease activity and suppress the 5'-&gt;3' exonuclease activity. Interacts with WRN, and this interaction stimulates both the 5'-&gt;3' exonuclease activity and cleavage of 5'-overhanging flap structures. Interacts with RECQL/RECQ1, and this interaction stimulates cleavage of 5'-overhanging flap structures. Interacts with DNA helicase ZGRF1; the interaction is increased following DNA damage induction. It depends on Mg(2+) as a cofactor. Phosphorylated upon DNA damage and in response to agents stalling DNA replication, probably by ATM or ATR. As to expression, highly expressed in the spleen and testis. Also expressed in the bone marrow, brain, lung, lymph node and thymus.

The protein resides in the nucleus. Its function is as follows. 5'-&gt;3' double-stranded DNA exonuclease which may also possess a cryptic 3'-&gt;5' double-stranded DNA exonuclease activity. Functions in DNA mismatch repair (MMR) to excise mismatch-containing DNA tracts directed by strand breaks located either 5' or 3' to the mismatch. Also exhibits endonuclease activity against 5'-overhanging flap structures similar to those generated by displacement synthesis when DNA polymerase encounters the 5'-end of a downstream Okazaki fragment. Required for somatic hypermutation (SHM) and class switch recombination (CSR) of immunoglobulin genes. Essential for male and female meiosis. In Mus musculus (Mouse), this protein is Exonuclease 1 (Exo1).